Consider the following 243-residue polypeptide: NH(3)-dependent NAD(+) synthetase (243 aa).

31–38 (GVSGGIDS) is a binding site for ATP. Asp37 contributes to the Mg(2+) binding site. Arg110 serves as a coordination point for deamido-NAD(+). Residue Thr130 coordinates ATP. Mg(2+) is bound at residue Glu135. Deamido-NAD(+) is bound by residues Lys143 and Asp150. Lys159 and Ser181 together coordinate ATP. 227-228 (HK) provides a ligand contact to deamido-NAD(+).

This sequence belongs to the NAD synthetase family. As to quaternary structure, homodimer.

It catalyses the reaction deamido-NAD(+) + NH4(+) + ATP = AMP + diphosphate + NAD(+) + H(+). It participates in cofactor biosynthesis; NAD(+) biosynthesis; NAD(+) from deamido-NAD(+) (ammonia route): step 1/1. Functionally, catalyzes the ATP-dependent amidation of deamido-NAD to form NAD. Uses ammonia as a nitrogen source. The chain is NH(3)-dependent NAD(+) synthetase from Malacoplasma penetrans (strain HF-2) (Mycoplasma penetrans).